The chain runs to 107 residues: Ribonuclease P protein component 4 (107 aa).

Zn(2+)-binding residues include C66, C69, C92, and C95.

This sequence belongs to the eukaryotic/archaeal RNase P protein component 4 family. Consists of a catalytic RNA component and at least 4-5 protein subunits. Zn(2+) serves as cofactor.

The protein resides in the cytoplasm. The enzyme catalyses Endonucleolytic cleavage of RNA, removing 5'-extranucleotides from tRNA precursor.. Its function is as follows. Part of ribonuclease P, a protein complex that generates mature tRNA molecules by cleaving their 5'-ends. The polypeptide is Ribonuclease P protein component 4 (Methanosarcina barkeri (strain Fusaro / DSM 804)).